A 65-amino-acid chain; its full sequence is Small ribosomal subunit protein bS21 (65 aa).

Residues 44–65 (DDRLKRSRGKRRAQRANEERNS) form a disordered region. The segment covering 48–57 (KRSRGKRRAQ) has biased composition (basic residues).

The protein belongs to the bacterial ribosomal protein bS21 family.

This Prosthecochloris aestuarii (strain DSM 271 / SK 413) protein is Small ribosomal subunit protein bS21.